The following is a 63-amino-acid chain: 2-hydroxymuconate tautomerase (63 aa).

Catalysis depends on proline 2, which acts as the Proton acceptor; via imino nitrogen.

Belongs to the 4-oxalocrotonate tautomerase family. As to quaternary structure, homohexamer.

The catalysed reaction is (2Z,4E)-2-hydroxyhexa-2,4-dienedioate = (3E)-2-oxohex-3-enedioate. It functions in the pathway aromatic compound metabolism; salicylate degradation. In terms of biological role, catalyzes the ketonization of 2-hydroxymuconate stereoselectively to yield 2-oxo-3-hexenedioate. The chain is 2-hydroxymuconate tautomerase (nahJ) from Stutzerimonas stutzeri (Pseudomonas stutzeri).